A 436-amino-acid polypeptide reads, in one-letter code: MQVSVENTSALERRMSITVPAERIESQVNKRLQQTAQKAKIPGFRPGKVPMSVIRQRYEADARQEAVGDVIQASFYEAVVEQKLNPAGAPSVEPKVLEKGKDLEYVATFEVFPEFTVAGFENIAVERLSADVADADLDNMLEILRKQNVRFEVADRAAQNDDQLNIDFVGKVDGEVFAGGSAKGTQLVLGSGRMIPGFEEGLVGAKAGEERVLNLTFPENYQNLDLANKAAEFTVTVNSVSEPKLPELTEEFFAQFGIKEAGLEGFRAEVRKNMERELRQAIKSKVKNQVMDGLLASNPIEVPKALLDNEVNRLRVQAVQQFGGNIKPDQLPAELFEEQAKRRVVLGLIVAEVVKQFDLKPDEDRVRELIQEMASAYQEPEQVVSWYYKNEQQLNEVRSVVLEEQVVDTVLQKASVTDKSVSYEEAVKPVEAPQAD.

In terms of domain architecture, PPIase FKBP-type spans 161–246 (DDQLNIDFVG…VNSVSEPKLP (86 aa)).

It belongs to the FKBP-type PPIase family. Tig subfamily.

It is found in the cytoplasm. It catalyses the reaction [protein]-peptidylproline (omega=180) = [protein]-peptidylproline (omega=0). Its function is as follows. Involved in protein export. Acts as a chaperone by maintaining the newly synthesized protein in an open conformation. Functions as a peptidyl-prolyl cis-trans isomerase. The chain is Trigger factor from Pseudomonas fluorescens (strain ATCC BAA-477 / NRRL B-23932 / Pf-5).